Here is a 354-residue protein sequence, read N- to C-terminus: CCN family member 3 (354 aa).

The signal sequence occupies residues 1–21; it reads MSLFLRKRCLCLGFLLFHLLS. Residues 25–99 enclose the IGFBP N-terminal domain; the sequence is ASLRCPSRCP…NNQTGICMVP (75 aa). 6 cysteine pairs are disulfide-bonded: C29–C55, C33–C57, C37–C58, C44–C61, C69–C83, and C75–C96. N-linked (GlcNAc...) asparagine glycosylation is present at N91. Residues 102-168 enclose the VWFC domain; sequence DNCVFDGVIY…GECCEKWTCG (67 aa). The region spanning 202–247 is the TSP type-1 domain; that stretch reads NCIEQTTEWSACSKSCGMGVSTRVTNRNRQCEMVKQTRLCIVRPCE. Residue C241 is the site of S-palmitoyl cysteine attachment. 5 disulfides stabilise this stretch: C261-C298, C278-C312, C289-C328, C292-C330, and C297-C334. The region spanning 261–335 is the CTCK domain; the sequence is CLRTKKSLKA…GTCTCYSNCP (75 aa). N-linked (GlcNAc...) asparagine glycosylation is present at N277.

Belongs to the CCN family. In terms of assembly, interacts with FBLN1. Interacts (via CTCK domain) with NOTCH1 (via the EGF-like repeat region). Interacts with GJA1/CX43. Interacts with ITGA5:ITGB1, ITGAV:ITGB3 and ITGAV:ITGB5. Interacts with ZDHHC22; the interaction may lead to CCN3 palmitoylation. Post-translationally, may be palmitoylated on Cys-241, which is important for extracellular secretion. Expressed in large vessels including the ascending aorta, carotid arteries, and the thoracic aorta, in medium-sized vessels such as coronary arteries and small pulmonary veins and also in small vessels. In addition, also found to be present in the heart (at protein level). Expressed in astrocytes (at protein level). Detected in brain, bone, lung and muscle tissues. Expressed in skin, expression highly increases 5 days post-wounding, peaking on the 7th day to decline after 9 days. Expressed in pancreatic ducts and beta-cell islets. Expressed in the brain, in arcuate nucleus ESR1/KISS1 neurons, during lactation (at protein level).

The protein resides in the secreted. It localises to the cytoplasm. The protein localises to the cell junction. It is found in the gap junction. Functionally, immediate-early protein playing a role in various cellular processes including proliferation, adhesion, migration, differentiation and survival. Acts by binding to integrins or membrane receptors such as NOTCH1. Essential regulator of hematopoietic stem and progenitor cell function. Inhibits myogenic differentiation through the activation of Notch-signaling pathway. Inhibits vascular smooth muscle cells proliferation by increasing expression of cell-cycle regulators such as CDKN2B or CDKN1A independently of TGFB1 signaling. Ligand of integrins ITGAV:ITGB3 and ITGA5:ITGB1, acts directly upon endothelial cells to stimulate pro-angiogenic activities and induces angiogenesis. In endothelial cells, supports cell adhesion, induces directed cell migration (chemotaxis) and promotes cell survival. Also plays a role in cutaneous wound healing acting as integrin receptor ligand. Supports skin fibroblast adhesion through ITGA5:ITGB1 and ITGA6:ITGB1 and induces fibroblast chemotaxis through ITGAV:ITGB5. Seems to enhance bFGF-induced DNA synthesis in fibroblasts. Involved in bone regeneration as a negative regulator. Enhances the articular chondrocytic phenotype, whereas it repressed the one representing endochondral ossification. Impairs pancreatic beta-cell function, inhibits beta-cell proliferation and insulin secretion. Plays a role as negative regulator of endothelial pro-inflammatory activation reducing monocyte adhesion, its anti-inflammatory effects occur secondary to the inhibition of NF-kappaB signaling pathway. Contributes to the control and coordination of inflammatory processes in atherosclerosis. Attenuates inflammatory pain through regulation of IL1B- and TNF-induced MMP9, MMP2 and CCL2 expression. Inhibits MMP9 expression through ITGB1 engagement. Brain osteoanabolic hormone. During lactation, maintains the maternal skeleton and viability of offspring. In this context, may act on osteochondral skeletal stem cells. The sequence is that of CCN family member 3 (Ccn3) from Mus musculus (Mouse).